The following is a 222-amino-acid chain: RING finger protein 141 (222 aa).

An RING-type zinc finger spans residues 147-184; sequence CCICMDGKADLILPCAHSFCQKCIDKWSGQSRNCPVCR.

The chain is RING finger protein 141 (rnf141) from Danio rerio (Zebrafish).